The chain runs to 141 residues: Large ribosomal subunit protein uL11A (141 aa).

Belongs to the universal ribosomal protein uL11 family. As to quaternary structure, part of the ribosomal stalk of the 50S ribosomal subunit. Interacts with L10 and the large rRNA to form the base of the stalk. L10 forms an elongated spine to which L12 dimers bind in a sequential fashion forming a multimeric L10(L12)X complex. Post-translationally, one or more lysine residues are methylated.

Its function is as follows. Forms part of the ribosomal stalk which helps the ribosome interact with GTP-bound translation factors. This Halalkalibacterium halodurans (strain ATCC BAA-125 / DSM 18197 / FERM 7344 / JCM 9153 / C-125) (Bacillus halodurans) protein is Large ribosomal subunit protein uL11A.